We begin with the raw amino-acid sequence, 180 residues long: Large ribosomal subunit protein uL18m (180 aa).

This sequence belongs to the universal ribosomal protein uL18 family. Component of the mitochondrial ribosome large subunit (39S) which comprises a 16S rRNA and about 50 distinct proteins.

The protein resides in the mitochondrion. Functionally, together with thiosulfate sulfurtransferase (TST), acts as a mitochondrial import factor for the cytosolic 5S rRNA. The precursor form shows RNA chaperone activity; is able to fold the 5S rRNA into an import-competent conformation that is recognized by rhodanese (TST). Both the cytoplasmic and mitochondrial forms are able to bind to the helix IV-loop D in the gamma domain of the 5S rRNA. In Mus musculus (Mouse), this protein is Large ribosomal subunit protein uL18m (Mrpl18).